We begin with the raw amino-acid sequence, 524 residues long: Bifunctional purine biosynthesis protein PurH (524 aa).

In terms of domain architecture, MGS-like spans 1–145 (MIKQALLSVS…KNHRDVTVIV (145 aa)).

Belongs to the PurH family.

The enzyme catalyses (6R)-10-formyltetrahydrofolate + 5-amino-1-(5-phospho-beta-D-ribosyl)imidazole-4-carboxamide = 5-formamido-1-(5-phospho-D-ribosyl)imidazole-4-carboxamide + (6S)-5,6,7,8-tetrahydrofolate. The catalysed reaction is IMP + H2O = 5-formamido-1-(5-phospho-D-ribosyl)imidazole-4-carboxamide. The protein operates within purine metabolism; IMP biosynthesis via de novo pathway; 5-formamido-1-(5-phospho-D-ribosyl)imidazole-4-carboxamide from 5-amino-1-(5-phospho-D-ribosyl)imidazole-4-carboxamide (10-formyl THF route): step 1/1. Its pathway is purine metabolism; IMP biosynthesis via de novo pathway; IMP from 5-formamido-1-(5-phospho-D-ribosyl)imidazole-4-carboxamide: step 1/1. This is Bifunctional purine biosynthesis protein PurH from Cupriavidus necator (strain ATCC 17699 / DSM 428 / KCTC 22496 / NCIMB 10442 / H16 / Stanier 337) (Ralstonia eutropha).